Reading from the N-terminus, the 338-residue chain is Isopenicillin N synthase (338 aa).

Arginine 89, tyrosine 93, serine 185, and tyrosine 191 together coordinate isopenicillin N. N-[(5S)-5-amino-5-carboxypentanoyl]-L-cysteinyl-D-valine is bound by residues arginine 89, tyrosine 93, serine 185, tyrosine 191, histidine 216, and aspartate 218. Residues 182–290 (TLSSVVLIRY…RQSLPFFVNL (109 aa)) form the Fe2OG dioxygenase domain. Fe(2+) is bound by residues histidine 216, aspartate 218, and histidine 272. Residue arginine 281 participates in 2-oxoglutarate binding. Position 283 (serine 283) interacts with isopenicillin N. Serine 283 is a binding site for N-[(5S)-5-amino-5-carboxypentanoyl]-L-cysteinyl-D-valine.

Belongs to the iron/ascorbate-dependent oxidoreductase family. In terms of assembly, monomer. Fe(2+) is required as a cofactor.

The protein localises to the cytoplasm. It is found in the cytosol. The enzyme catalyses N-[(5S)-5-amino-5-carboxypentanoyl]-L-cysteinyl-D-valine + O2 = isopenicillin N + 2 H2O. It participates in antibiotic biosynthesis; penicillin G biosynthesis; penicillin G from L-alpha-aminoadipate and L-cysteine and L-valine: step 2/3. In terms of biological role, isopenicillin N synthase; part of the gene cluster that mediates the biosynthesis of penicillin, the world's most important antibiotic. IpnA catalyzes the cyclization of the tripeptide N-[(5S)-5-amino-5-carboxypentanoyl]-L-cysteinyl-D-valine (LLD-ACV or ACV) to form isopenicillin N (IPN) that contains the beta-lactam nucleus. The penicillin biosynthesis occurs via 3 enzymatic steps, the first corresponding to the production of the tripeptide N-[(5S)-5-amino-5-carboxypentanoyl]-L-cysteinyl-D-valine (LLD-ACV or ACV) by the NRPS pcbAB. The tripeptide ACV is then cyclized to isopenicillin N (IPN) by the isopenicillin N synthase pcbC that forms the beta-lactam nucleus. Finally, the alpha-aminoadipyl side chain is exchanged for phenylacetic acid by the isopenicillin N acyltransferase penDE to yield penicillin in the peroxisomal matrix. The sequence is that of Isopenicillin N synthase (PCBC) from Hapsidospora chrysogena (Acremonium chrysogenum).